Here is a 409-residue protein sequence, read N- to C-terminus: Tyrosine--tRNA ligase (409 aa).

Tyr39 provides a ligand contact to L-tyrosine. The 'HIGH' region signature appears at 44-53; sequence PTAPSLHVGS. L-tyrosine contacts are provided by Tyr176 and Gln180. The short motif at 236 to 240 is the 'KMSKS' region element; it reads KMGKT. Residue Lys239 coordinates ATP. An S4 RNA-binding domain is found at 346–409; that stretch reads IGIVDALVGL…KKKHGILRKA (64 aa).

Belongs to the class-I aminoacyl-tRNA synthetase family. TyrS type 1 subfamily. In terms of assembly, homodimer.

It is found in the cytoplasm. It catalyses the reaction tRNA(Tyr) + L-tyrosine + ATP = L-tyrosyl-tRNA(Tyr) + AMP + diphosphate + H(+). In terms of biological role, catalyzes the attachment of tyrosine to tRNA(Tyr) in a two-step reaction: tyrosine is first activated by ATP to form Tyr-AMP and then transferred to the acceptor end of tRNA(Tyr). The polypeptide is Tyrosine--tRNA ligase (Novosphingobium aromaticivorans (strain ATCC 700278 / DSM 12444 / CCUG 56034 / CIP 105152 / NBRC 16084 / F199)).